A 1402-amino-acid polypeptide reads, in one-letter code: DNA-directed RNA polymerase subunit beta' (1402 aa).

The Zn(2+) site is built by Cys71, Cys73, Cys86, and Cys89. The Mg(2+) site is built by Asp462, Asp464, and Asp466. Zn(2+)-binding residues include Cys808, Cys881, Cys888, and Cys891.

The protein belongs to the RNA polymerase beta' chain family. As to quaternary structure, the RNAP catalytic core consists of 2 alpha, 1 beta, 1 beta' and 1 omega subunit. When a sigma factor is associated with the core the holoenzyme is formed, which can initiate transcription. Requires Mg(2+) as cofactor. Zn(2+) serves as cofactor.

It carries out the reaction RNA(n) + a ribonucleoside 5'-triphosphate = RNA(n+1) + diphosphate. In terms of biological role, DNA-dependent RNA polymerase catalyzes the transcription of DNA into RNA using the four ribonucleoside triphosphates as substrates. In Hyphomonas neptunium (strain ATCC 15444), this protein is DNA-directed RNA polymerase subunit beta'.